The sequence spans 908 residues: PTS system glucose-specific EIICBA component (908 aa).

A PTS EIIC type-1; first part domain is found at 1-264 (MQISLVKIRN…YAPLWYTSAG (264 aa)). 5 consecutive transmembrane segments (helical) span residues 31–51 (LMIP…GDAI), 71–91 (GGNV…AITF), 100–120 (FSAF…IIPV), 155–175 (VFGG…FYAI), and 189–209 (FVPI…LMVW). The unknown stretch occupies residues 265-450 (GSLQEIANQQ…VSQFTVAVPS (186 aa)). The PTS EIIC type-1; second part domain maps to 451-602 (LNPAQYSQGK…FNLATPGRGG (152 aa)). 5 helical membrane passes run 459–479 (GKFP…ILAA), 487–507 (ASSI…TEPF), 509–529 (FTFL…LAAV), 536–556 (LLSA…ILYG), and 571–591 (VPII…FLTI). In terms of domain architecture, PTS EIIB type-1 spans 631–713 (QIEAGMLLRA…QDIIQGKVNW (83 aa)). C653 (phosphocysteine intermediate; for EIIB activity) is an active-site residue. A PTS EIIA type-1 domain is found at 762 to 875 (DDTFKNRLVG…DPITPFIVMQ (114 aa)). H815 acts as the Tele-phosphohistidine intermediate; for EIIA activity in catalysis.

The protein resides in the cell membrane. It catalyses the reaction N(pros)-phospho-L-histidyl-[protein] + D-glucose(out) = D-glucose 6-phosphate(in) + L-histidyl-[protein]. Its function is as follows. The phosphoenolpyruvate-dependent sugar phosphotransferase system (sugar PTS), a major carbohydrate active transport system, catalyzes the phosphorylation of incoming sugar substrates concomitantly with their translocation across the cell membrane. This system is involved in glucose transport. The polypeptide is PTS system glucose-specific EIICBA component (ptsG) (Mycoplasma genitalium (strain ATCC 33530 / DSM 19775 / NCTC 10195 / G37) (Mycoplasmoides genitalium)).